A 436-amino-acid polypeptide reads, in one-letter code: Serine--tRNA ligase (436 aa).

242–244 is an L-serine binding site; that stretch reads TAE. 273–275 provides a ligand contact to ATP; that stretch reads RSE. Glu296 provides a ligand contact to L-serine. 360 to 363 provides a ligand contact to ATP; it reads EISS. Residue Ser395 participates in L-serine binding.

It belongs to the class-II aminoacyl-tRNA synthetase family. Type-1 seryl-tRNA synthetase subfamily. As to quaternary structure, homodimer. The tRNA molecule binds across the dimer.

Its subcellular location is the cytoplasm. It carries out the reaction tRNA(Ser) + L-serine + ATP = L-seryl-tRNA(Ser) + AMP + diphosphate + H(+). It catalyses the reaction tRNA(Sec) + L-serine + ATP = L-seryl-tRNA(Sec) + AMP + diphosphate + H(+). Its pathway is aminoacyl-tRNA biosynthesis; selenocysteinyl-tRNA(Sec) biosynthesis; L-seryl-tRNA(Sec) from L-serine and tRNA(Sec): step 1/1. In terms of biological role, catalyzes the attachment of serine to tRNA(Ser). Is also able to aminoacylate tRNA(Sec) with serine, to form the misacylated tRNA L-seryl-tRNA(Sec), which will be further converted into selenocysteinyl-tRNA(Sec). The chain is Serine--tRNA ligase from Polynucleobacter necessarius subsp. necessarius (strain STIR1).